The chain runs to 430 residues: tRNA(Ile)-lysidine synthase (430 aa).

Residue 21 to 26 (SGGLDS) coordinates ATP.

Belongs to the tRNA(Ile)-lysidine synthase family.

Its subcellular location is the cytoplasm. It catalyses the reaction cytidine(34) in tRNA(Ile2) + L-lysine + ATP = lysidine(34) in tRNA(Ile2) + AMP + diphosphate + H(+). Functionally, ligates lysine onto the cytidine present at position 34 of the AUA codon-specific tRNA(Ile) that contains the anticodon CAU, in an ATP-dependent manner. Cytidine is converted to lysidine, thus changing the amino acid specificity of the tRNA from methionine to isoleucine. In Salmonella choleraesuis (strain SC-B67), this protein is tRNA(Ile)-lysidine synthase.